The following is a 452-amino-acid chain: NADH-cytochrome b5 reductase-like protein alnC (452 aa).

The Cytochrome b5 heme-binding domain occupies 4-80 (PASITLAEVA…LKTLLVGSLQ (77 aa)). 33 to 38 (AEYRED) serves as a coordination point for FMN. 2 residues coordinate heme: His-39 and His-63. FMN contacts are provided by residues 80–83 (QSKT) and 116–125 (NDTSKYGQLP). The next 2 membrane-spanning stretches (helical) occupy residues 120–140 (KYGQLPSLVLAGGLALLFFTL) and 166–186 (VGFLGGFLTATTLNTAAATFV). The region spanning 225-324 (NTQQFLTLVD…RGPFGRYSPS (100 aa)) is the FAD-binding FR-type domain. Residue 302–305 (YLLN) coordinates FAD. Residues 389 to 390 (GQ) and 395 to 399 (WKGLR) contribute to the NADP(+) site.

Belongs to the flavoprotein pyridine nucleotide cytochrome reductase family. Requires FAD as cofactor. The cofactor is FMN.

The protein localises to the membrane. Its pathway is polyketide biosynthesis. In terms of biological role, NADH-cytochrome b5 reductase-like protein; part of the gene cluster that mediates the biosynthesis of asperlin, a polyketide showing anti-inflammatory, antitumor and antibiotic activities. The first step of the asperlin biosynthesis is the production of the intermediate 2,4,6-octatrienoic acid by the highly redusing polyketide synthase alnA with cleavage of the PKS product by the esterase alnB. 2,4,6-octatrienoic acid is further converted to asperlin via several steps involving the remaining enzymes from the cluster. The chain is NADH-cytochrome b5 reductase-like protein alnC from Emericella nidulans (strain FGSC A4 / ATCC 38163 / CBS 112.46 / NRRL 194 / M139) (Aspergillus nidulans).